A 298-amino-acid chain; its full sequence is 4-hydroxy-tetrahydrodipicolinate synthase (298 aa).

T48 serves as a coordination point for pyruvate. The active-site Proton donor/acceptor is Y137. Residue K166 is the Schiff-base intermediate with substrate of the active site. Residue I207 coordinates pyruvate.

The protein belongs to the DapA family. In terms of assembly, homotetramer; dimer of dimers.

It is found in the cytoplasm. It catalyses the reaction L-aspartate 4-semialdehyde + pyruvate = (2S,4S)-4-hydroxy-2,3,4,5-tetrahydrodipicolinate + H2O + H(+). Its pathway is amino-acid biosynthesis; L-lysine biosynthesis via DAP pathway; (S)-tetrahydrodipicolinate from L-aspartate: step 3/4. Catalyzes the condensation of (S)-aspartate-beta-semialdehyde [(S)-ASA] and pyruvate to 4-hydroxy-tetrahydrodipicolinate (HTPA). In Campylobacter hominis (strain ATCC BAA-381 / DSM 21671 / CCUG 45161 / LMG 19568 / NCTC 13146 / CH001A), this protein is 4-hydroxy-tetrahydrodipicolinate synthase.